Reading from the N-terminus, the 395-residue chain is Bifunctional fatty acid conjugase/Delta(12)-oleate desaturase (395 aa).

The next 2 membrane-spanning stretches (helical) occupy residues 73–93 (FALA…LPKP) and 97–117 (MAWP…WVIA). The Histidine box-1 motif lies at 118–122 (HECGH). Residues 130–150 (WVNDAVGFFLHTSLLVPYFPF) traverse the membrane as a helical segment. The short motif at 154–158 (HRRHH) is the Histidine box-2 element. A run of 3 helical transmembrane segments spans residues 192-212 (VLTL…FNAS), 236-256 (FWVH…YRLA), and 264-284 (LLSI…LITF). Positions 328 to 332 (HVIHH) match the Histidine box-3 motif.

Belongs to the fatty acid desaturase type 1 family.

It localises to the membrane. It carries out the reaction a (9Z,12Z)-octadecadienoyl-containing glycerolipid + 2 Fe(II)-[cytochrome b5] + O2 + 2 H(+) = a (9Z,11E,13Z)-octadeca-9,11,13-trienoyl-containing glycerolipid + 2 Fe(III)-[cytochrome b5] + 2 H2O. The protein operates within lipid metabolism; polyunsaturated fatty acid biosynthesis. In terms of biological role, converts a single cis double bond at position 12 of linoleate incorporated into phosphatidylcholine into conjugated 11-trans and 13-cis double bonds. Produces punicic acid (18:3(9Z,11E,13Z)) from linoleic acid and conjugated octadecatetraenoic fatty acid from gamma-linolenic acid. No activity with cis- and trans-vaccenic acid, alpha-linolenic acid or homo-gamma-linolenic acid. 16:2(9Z,12Z), 18:3(9Z,12Z,15Z) and 18:2(9Z,12Z) are substrates for the conjugase to form trans-Delta(11) and cis-Delta(13) double bonds. No activity on the cis-Delta(9) double bonds of oleic and palmitoleic acids. This chain is Bifunctional fatty acid conjugase/Delta(12)-oleate desaturase, found in Punica granatum (Pomegranate).